Reading from the N-terminus, the 590-residue chain is DEAD-box ATP-dependent RNA helicase 27 (590 aa).

A disordered region spans residues 1-92 (MAPAPATTSS…EKGNEGGSGI (92 aa)). The span at 27–62 (SDSESEELSYDTAAADEEEGEEEAPNQMEELEEEQE) shows a compositional bias: acidic residues. A coiled-coil region spans residues 40–87 (AADEEEGEEEAPNQMEELEEEQEEEKKEKKQKKEMSKEKKRKKEKGNE). The segment covering 63-76 (EEKKEKKQKKEMSK) has biased composition (basic and acidic residues). A Q motif motif is present at residues 96-124 (MLFSELGVSEPTARAIREMNYTYLTQIQA). Positions 127-302 (IPHLLNGKDV…KLSFEKNEES (176 aa)) constitute a Helicase ATP-binding domain. 140-147 (AKTGSGKT) is an ATP binding site. Positions 250–253 (DEAD) match the DEAD box motif. The Helicase C-terminal domain occupies 335–488 (RFLVLYAFLK…NKVPNLQSHL (154 aa)). Residues 551-590 (SASKHRRKMRKVDGGRRHGISAANPYGRKGGDDKRQFARF) form a disordered region. Residues 579–590 (KGGDDKRQFARF) are compositionally biased toward basic and acidic residues.

Belongs to the DEAD box helicase family. DDX18/HAS1 subfamily.

The catalysed reaction is ATP + H2O = ADP + phosphate + H(+). The polypeptide is DEAD-box ATP-dependent RNA helicase 27 (Oryza sativa subsp. japonica (Rice)).